A 944-amino-acid chain; its full sequence is Isoleucine--tRNA ligase (944 aa).

Residues 58-68 (PYANGSIHIGH) carry the 'HIGH' region motif. An L-isoleucyl-5'-AMP-binding site is contributed by Glu563. Residues 604–608 (KMSKS) carry the 'KMSKS' region motif. Lys607 is an ATP binding site. Cys907, Cys910, Cys927, and Cys930 together coordinate Zn(2+).

The protein belongs to the class-I aminoacyl-tRNA synthetase family. IleS type 1 subfamily. As to quaternary structure, monomer. The cofactor is Zn(2+).

The protein resides in the cytoplasm. The enzyme catalyses tRNA(Ile) + L-isoleucine + ATP = L-isoleucyl-tRNA(Ile) + AMP + diphosphate. Functionally, catalyzes the attachment of isoleucine to tRNA(Ile). As IleRS can inadvertently accommodate and process structurally similar amino acids such as valine, to avoid such errors it has two additional distinct tRNA(Ile)-dependent editing activities. One activity is designated as 'pretransfer' editing and involves the hydrolysis of activated Val-AMP. The other activity is designated 'posttransfer' editing and involves deacylation of mischarged Val-tRNA(Ile). The chain is Isoleucine--tRNA ligase from Salmonella choleraesuis (strain SC-B67).